The chain runs to 276 residues: Large ribosomal subunit protein uL2c (276 aa).

A disordered region spans residues 225 to 276 (AMNPVDHPHGGGEGRTPIGRKKPVTPWGYSALGKKSRKRNRYSDASILRRRE).

Belongs to the universal ribosomal protein uL2 family. As to quaternary structure, part of the 50S ribosomal subunit.

It localises to the plastid. The protein resides in the chloroplast. The protein is Large ribosomal subunit protein uL2c (rpl2) of Pinus thunbergii (Japanese black pine).